We begin with the raw amino-acid sequence, 254 residues long: Ribonuclease HII (254 aa).

An RNase H type-2 domain is found at 70-254 (QAIAGIDEVG…TFEPVKSMLG (185 aa)). A divalent metal cation contacts are provided by Asp76, Glu77, and Asp168.

Belongs to the RNase HII family. Mn(2+) is required as a cofactor. Mg(2+) serves as cofactor.

Its subcellular location is the cytoplasm. The enzyme catalyses Endonucleolytic cleavage to 5'-phosphomonoester.. Its function is as follows. Endonuclease that specifically degrades the RNA of RNA-DNA hybrids. The protein is Ribonuclease HII of Streptococcus gordonii (strain Challis / ATCC 35105 / BCRC 15272 / CH1 / DL1 / V288).